Reading from the N-terminus, the 318-residue chain is NADH-ubiquinone oxidoreductase chain 1 (318 aa).

8 helical membrane-spanning segments follow: residues 2–22, 70–90, 100–120, 147–167, 172–192, 222–242, 253–273, and 294–314; these read FMIN…FLTL, MFIL…IPLP, LGVL…LWSG, AIIL…TLII, MWLI…TLAE, LFFM…AILF, ELYT…FLWI, and LPLT…TSGI.

This sequence belongs to the complex I subunit 1 family. In terms of assembly, core subunit of respiratory chain NADH dehydrogenase (Complex I) which is composed of 45 different subunits.

The protein resides in the mitochondrion inner membrane. The enzyme catalyses a ubiquinone + NADH + 5 H(+)(in) = a ubiquinol + NAD(+) + 4 H(+)(out). In terms of biological role, core subunit of the mitochondrial membrane respiratory chain NADH dehydrogenase (Complex I) which catalyzes electron transfer from NADH through the respiratory chain, using ubiquinone as an electron acceptor. Essential for the catalytic activity and assembly of complex I. The chain is NADH-ubiquinone oxidoreductase chain 1 (MT-ND1) from Bos indicus (Zebu).